Consider the following 138-residue polypeptide: Histone H2AX (138 aa).

Residues 1–23 form a disordered region; sequence MSTTGKGGKAKGKTASSKQVSRS. Ser2 bears the N-acetylserine mark. Lys6, Lys9, Lys11, Lys13, and Lys18 each carry N6-acetyllysine. Position 123 is a phosphoserine (Ser123). Residue Lys124 forms a Glycyl lysine isopeptide (Lys-Gly) (interchain with G-Cter in ubiquitin) linkage. Phosphoserine is present on residues Ser125, Ser130, and Ser135. A [ST]-Q motif motif is present at residues 135–136; sequence SQ.

Belongs to the histone H2A family. In terms of assembly, the nucleosome is a histone octamer containing two molecules each of H2A, H2B, H3 and H4 assembled in one H3-H4 heterotetramer and two H2A-H2B heterodimers. The octamer wraps approximately 147 bp of DNA. Post-translationally, monoubiquitination of Lys-124 gives a specific tag for epigenetic transcriptional repression. Phosphorylated to form H2AX134ph (gamma-H2AX) in response to DNA double-strand breaks (DSBs) generated by exogenous genotoxic agents in both the mitotic MIC and the amitotic MAC. Gamma-H2AX is also found when programmed DNA rearrangements occur, namely homologous recombination in the MIC during prophase of meiosis, and chromosome fragmentation and DNA elimination in developing MACs. Gamma-H2AX is important to recover from exogenous DNA damage and to repair breaks associated with normal micronuclear meiosis and mitosis and macronuclear amitotic division. In terms of processing, acetylation occurs almost exclusively in the MAC.

It is found in the nucleus. It localises to the chromosome. In terms of biological role, core component of nucleosome which plays a central role in DNA double strand break (DSB) repair. Nucleosomes wrap and compact DNA into chromatin, limiting DNA accessibility to the cellular machineries which require DNA as a template. Histones thereby play a central role in transcription regulation, DNA repair, DNA replication and chromosomal stability. DNA accessibility is regulated via a complex set of post-translational modifications of histones, also called histone code, and nucleosome remodeling. The protein is Histone H2AX (HTA1) of Tetrahymena thermophila (strain SB210).